Here is a 321-residue protein sequence, read N- to C-terminus: tRNA(Ile)-lysidine synthase (321 aa).

21–26 (SYGSDS) provides a ligand contact to ATP.

This sequence belongs to the tRNA(Ile)-lysidine synthase family.

It localises to the cytoplasm. It carries out the reaction cytidine(34) in tRNA(Ile2) + L-lysine + ATP = lysidine(34) in tRNA(Ile2) + AMP + diphosphate + H(+). Functionally, ligates lysine onto the cytidine present at position 34 of the AUA codon-specific tRNA(Ile) that contains the anticodon CAU, in an ATP-dependent manner. Cytidine is converted to lysidine, thus changing the amino acid specificity of the tRNA from methionine to isoleucine. In Campylobacter jejuni subsp. jejuni serotype O:2 (strain ATCC 700819 / NCTC 11168), this protein is tRNA(Ile)-lysidine synthase.